The primary structure comprises 256 residues: Adenosylcobinamide-GDP ribazoletransferase (256 aa).

Transmembrane regions (helical) follow at residues 40-60, 64-84, 114-134, 143-163, 194-214, and 234-254; these read YFPL…WLVL, PAQG…TGAF, IGAF…QLLS, ILVA…SHLL, VVPL…GLIL, and CLGM…LAWM.

The protein belongs to the CobS family. The cofactor is Mg(2+).

The protein resides in the cell inner membrane. It carries out the reaction alpha-ribazole + adenosylcob(III)inamide-GDP = adenosylcob(III)alamin + GMP + H(+). The enzyme catalyses alpha-ribazole 5'-phosphate + adenosylcob(III)inamide-GDP = adenosylcob(III)alamin 5'-phosphate + GMP + H(+). The protein operates within cofactor biosynthesis; adenosylcobalamin biosynthesis; adenosylcobalamin from cob(II)yrinate a,c-diamide: step 7/7. Functionally, joins adenosylcobinamide-GDP and alpha-ribazole to generate adenosylcobalamin (Ado-cobalamin). Also synthesizes adenosylcobalamin 5'-phosphate from adenosylcobinamide-GDP and alpha-ribazole 5'-phosphate. The sequence is that of Adenosylcobinamide-GDP ribazoletransferase from Ralstonia pickettii (strain 12J).